Consider the following 389-residue polypeptide: Naringenin-chalcone synthase (389 aa).

Cysteine 164 is a catalytic residue.

This sequence belongs to the thiolase-like superfamily. Chalcone/stilbene synthases family. Expressed in glandular trichomes. Detected at low levels in female flowers, stems, seeds, leaves and roots.

It localises to the cytoplasm. The enzyme catalyses (E)-4-coumaroyl-CoA + 3 malonyl-CoA + 3 H(+) = 2',4,4',6'-tetrahydroxychalcone + 3 CO2 + 4 CoA. In terms of biological role, chalcone synthase that can also use isovaleryl-CoA, isobutyryl-CoA or hexanoyl-CoA as substrates, but that is unable to produce olivetol or olivetolic acid. The protein is Naringenin-chalcone synthase (CHS) of Cannabis sativa (Hemp).